A 486-amino-acid chain; its full sequence is N-succinylglutamate 5-semialdehyde dehydrogenase (486 aa).

Residue Gly220–Gly225 participates in NAD(+) binding. Residues Glu243 and Cys277 contribute to the active site.

Belongs to the aldehyde dehydrogenase family. AstD subfamily.

The catalysed reaction is N-succinyl-L-glutamate 5-semialdehyde + NAD(+) + H2O = N-succinyl-L-glutamate + NADH + 2 H(+). Its pathway is amino-acid degradation; L-arginine degradation via AST pathway; L-glutamate and succinate from L-arginine: step 4/5. Functionally, catalyzes the NAD-dependent reduction of succinylglutamate semialdehyde into succinylglutamate. This Shewanella frigidimarina (strain NCIMB 400) protein is N-succinylglutamate 5-semialdehyde dehydrogenase.